The sequence spans 130 residues: Albumin-1 D (130 aa).

An N-terminal signal peptide occupies residues 1–26 (MASVKLASLIVLFATLGMFLTKNVGA). 3 disulfide bridges follow: C29–C46, C33–C48, and C41–C58. Propeptides lie at residues 64-69 (VFLKAN) and 123-130 (LLKSVSTA).

The C-terminal glycine may be removed from PA1b. In terms of tissue distribution, major component of both the cotyledons and embryonic axes of mature seeds.

Functionally, PA1b binds to basic 7S globulin (BG) and stimulates its phosphorylation activity. Involved in the signal transduction system to regulate the growth and differentiation as a hormone peptide. Toxic to various insects through binding to a high affinity binding site in the insect gut. The sequence is that of Albumin-1 D from Pisum sativum (Garden pea).